A 174-amino-acid polypeptide reads, in one-letter code: Pituitary tumor-transforming gene 1 protein-interacting protein (174 aa).

The signal sequence occupies residues 1 to 29 (MASAVLGLTLRWVMFLSAVLLLLLPGASA). Residues 30–93 (QEPPGVGCSE…RWGVCWVNFE (64 aa)) lie on the Extracellular side of the membrane. Residues 36 to 89 (GCSEYTNRSCEECLRNVSCLWCNENKACLDYPVRKILPPASLCKLSSARWGVCW) enclose the PSI domain. Residues Asn-42 and Asn-51 are each glycosylated (N-linked (GlcNAc...) asparagine). Residues 94 to 114 (ALIITMSVLGGSVLLGITVCC) form a helical membrane-spanning segment. The Cytoplasmic portion of the chain corresponds to 115-174 (CCCCRRKRSRKPDKSDERAMREQEERRVRQEERRAEMKSRHDEIRKKYGLFKEQNPYEKF). The interval 126–155 (PDKSDERAMREQEERRVRQEERRAEMKSRH) is disordered. The stretch at 127–163 (DKSDERAMREQEERRVRQEERRAEMKSRHDEIRKKYG) forms a coiled coil. Position 171 is a phosphotyrosine (Tyr-171).

Interacts with PTTG1.

It localises to the cell membrane. It is found in the cytoplasm. The protein resides in the nucleus. In terms of biological role, may facilitate PTTG1 nuclear translocation. This Rattus norvegicus (Rat) protein is Pituitary tumor-transforming gene 1 protein-interacting protein (Pttg1ip).